The chain runs to 189 residues: Large ribosomal subunit protein bL17 (189 aa).

Belongs to the bacterial ribosomal protein bL17 family. As to quaternary structure, part of the 50S ribosomal subunit. Contacts protein L32.

The polypeptide is Large ribosomal subunit protein bL17 (Rhodococcus jostii (strain RHA1)).